A 311-amino-acid chain; its full sequence is MSNYVIQADQQLLDALRAHYQDALSDRLPAGALFAVKRPDVVITAYRSGKVLFQGKAAEQEAGKWMVKRGADPGKRQERETASPPLEHRLEKLSAIGSDEVGTGDYFGPIVVAAAYVDRSHIAKIAALGVKDSKQLTDEAIHKIAPAIMETAPYAVTVLDNAEYNRWQRSGMPQTKMKALLHNRTLAKLVDAIAPIEPEAIIIDQFLERGSYFRCLADETRIVSDRVHCLPKAESVHVAVAAASIIARYVFLEEMERLSRTVGLLLPKGAGAIVDEAAARIIRERGAEALETCAKLHFANTKKALDIAKHR.

The region spanning 93-310 is the RNase H type-2 domain; that stretch reads LSAIGSDEVG…TKKALDIAKH (218 aa). 3 residues coordinate a divalent metal cation: Asp-99, Glu-100, and Asp-204.

This sequence belongs to the RNase HII family. RnhC subfamily. It depends on Mn(2+) as a cofactor. Mg(2+) serves as cofactor.

Its subcellular location is the cytoplasm. It carries out the reaction Endonucleolytic cleavage to 5'-phosphomonoester.. Its function is as follows. Endonuclease that specifically degrades the RNA of RNA-DNA hybrids. The protein is Ribonuclease HIII of Geobacillus kaustophilus (strain HTA426).